Here is a 555-residue protein sequence, read N- to C-terminus: CTP synthase (555 aa).

The amidoligase domain stretch occupies residues 1 to 265; that stretch reads MTRYIFITGG…GNRVCEKLNI (265 aa). Serine 13 is a CTP binding site. Serine 13 is a binding site for UTP. Residues 14 to 19 and aspartate 71 each bind ATP; that span reads SLGKGI. 2 residues coordinate Mg(2+): aspartate 71 and glutamate 139. CTP contacts are provided by residues 146–148, 186–191, and lysine 222; these read DIE and KTKPTQ. UTP contacts are provided by residues 186–191 and lysine 222; that span reads KTKPTQ. The Glutamine amidotransferase type-1 domain occupies 290-541; sequence TVAVVGKYVD…IKAGLAAKEA (252 aa). Glycine 351 contributes to the L-glutamine binding site. Cysteine 378 acts as the Nucleophile; for glutamine hydrolysis in catalysis. L-glutamine contacts are provided by residues 379–382, glutamate 402, and arginine 469; that span reads LGMQ. Catalysis depends on residues histidine 514 and glutamate 516.

Belongs to the CTP synthase family. Homotetramer.

The catalysed reaction is UTP + L-glutamine + ATP + H2O = CTP + L-glutamate + ADP + phosphate + 2 H(+). It carries out the reaction L-glutamine + H2O = L-glutamate + NH4(+). The enzyme catalyses UTP + NH4(+) + ATP = CTP + ADP + phosphate + 2 H(+). Its pathway is pyrimidine metabolism; CTP biosynthesis via de novo pathway; CTP from UDP: step 2/2. Its activity is regulated as follows. Allosterically activated by GTP, when glutamine is the substrate; GTP has no effect on the reaction when ammonia is the substrate. The allosteric effector GTP functions by stabilizing the protein conformation that binds the tetrahedral intermediate(s) formed during glutamine hydrolysis. Inhibited by the product CTP, via allosteric rather than competitive inhibition. Functionally, catalyzes the ATP-dependent amination of UTP to CTP with either L-glutamine or ammonia as the source of nitrogen. Regulates intracellular CTP levels through interactions with the four ribonucleotide triphosphates. The protein is CTP synthase of Coxiella burnetii (strain RSA 493 / Nine Mile phase I).